Here is a 238-residue protein sequence, read N- to C-terminus: Probable transcriptional regulatory protein MGAS2096_Spy0287 (238 aa).

It belongs to the TACO1 family. YeeN subfamily.

The protein resides in the cytoplasm. This Streptococcus pyogenes serotype M12 (strain MGAS2096) protein is Probable transcriptional regulatory protein MGAS2096_Spy0287.